The primary structure comprises 65 residues: Crotamine CRO1 (65 aa).

The N-terminal stretch at 1 to 22 is a signal peptide; it reads MKILYLLFAFLFLAFLSEPGNA. Intrachain disulfides connect Cys26/Cys58, Cys33/Cys52, and Cys40/Cys59.

The protein belongs to the crotamine-myotoxin family. Monomer. In terms of tissue distribution, expressed by the venom gland.

The protein resides in the secreted. Cationic peptide that possesses multiple functions. It acts as a cell-penetrating peptide (CPP), and as a potent voltage-gated potassium channel (Kv) inhibitor. It exhibits antimicrobial activities, hind limb paralysis, and severe muscle necrosis by a non-enzymatic mechanism. This Crotalus durissus terrificus (South American rattlesnake) protein is Crotamine CRO1 (CRO1).